Here is a 441-residue protein sequence, read N- to C-terminus: Tubulin beta-1 chain (441 aa).

Residues Gln11, Glu69, Ser138, Gly142, Thr143, Gly144, Asn204, and Asn226 each coordinate GTP. Mg(2+) is bound at residue Glu69.

The protein belongs to the tubulin family. In terms of assembly, dimer of alpha and beta chains. A typical microtubule is a hollow water-filled tube with an outer diameter of 25 nm and an inner diameter of 15 nM. Alpha-beta heterodimers associate head-to-tail to form protofilaments running lengthwise along the microtubule wall with the beta-tubulin subunit facing the microtubule plus end conferring a structural polarity. Microtubules usually have 13 protofilaments but different protofilament numbers can be found in some organisms and specialized cells. The cofactor is Mg(2+). As to expression, expressed primarily in touch receptor neurons.

The protein localises to the cytoplasm. It localises to the cytoskeleton. Its function is as follows. TTubulin is the major constituent of microtubules, a cylinder consisting of laterally associated linear protofilaments composed of alpha- and beta-tubulin heterodimers. Microtubules grow by the addition of GTP-tubulin dimers to the microtubule end, where a stabilizing cap forms. Below the cap, tubulin dimers are in GDP-bound state, owing to GTPase activity of alpha-tubulin. Plays a role in mechanosensory transduction (touch sensitivity). Mec-7 beta-tubulin is required for the production of 15-protofilament microtubules. This is Tubulin beta-1 chain (mec-7) from Caenorhabditis elegans.